The sequence spans 100 residues: Aspartyl/glutamyl-tRNA(Asn/Gln) amidotransferase subunit C (100 aa).

The protein belongs to the GatC family. As to quaternary structure, heterotrimer of A, B and C subunits.

It catalyses the reaction L-glutamyl-tRNA(Gln) + L-glutamine + ATP + H2O = L-glutaminyl-tRNA(Gln) + L-glutamate + ADP + phosphate + H(+). The enzyme catalyses L-aspartyl-tRNA(Asn) + L-glutamine + ATP + H2O = L-asparaginyl-tRNA(Asn) + L-glutamate + ADP + phosphate + 2 H(+). Functionally, allows the formation of correctly charged Asn-tRNA(Asn) or Gln-tRNA(Gln) through the transamidation of misacylated Asp-tRNA(Asn) or Glu-tRNA(Gln) in organisms which lack either or both of asparaginyl-tRNA or glutaminyl-tRNA synthetases. The reaction takes place in the presence of glutamine and ATP through an activated phospho-Asp-tRNA(Asn) or phospho-Glu-tRNA(Gln). The sequence is that of Aspartyl/glutamyl-tRNA(Asn/Gln) amidotransferase subunit C from Petrotoga mobilis (strain DSM 10674 / SJ95).